Consider the following 124-residue polypeptide: S-adenosylmethionine decarboxylase proenzyme (124 aa).

Ser63 acts as the Schiff-base intermediate with substrate; via pyruvic acid in catalysis. The residue at position 63 (Ser63) is a Pyruvic acid (Ser); by autocatalysis. His68 acts as the Proton acceptor; for processing activity in catalysis. Cys83 acts as the Proton donor; for catalytic activity in catalysis.

This sequence belongs to the prokaryotic AdoMetDC family. Type 1 subfamily. As to quaternary structure, heterotetramer of two alpha and two beta chains arranged as a dimer of alpha/beta heterodimers. Pyruvate is required as a cofactor. In terms of processing, is synthesized initially as an inactive proenzyme. Formation of the active enzyme involves a self-maturation process in which the active site pyruvoyl group is generated from an internal serine residue via an autocatalytic post-translational modification. Two non-identical subunits are generated from the proenzyme in this reaction, and the pyruvate is formed at the N-terminus of the alpha chain, which is derived from the carboxyl end of the proenzyme. The post-translation cleavage follows an unusual pathway, termed non-hydrolytic serinolysis, in which the side chain hydroxyl group of the serine supplies its oxygen atom to form the C-terminus of the beta chain, while the remainder of the serine residue undergoes an oxidative deamination to produce ammonia and the pyruvoyl group blocking the N-terminus of the alpha chain.

The enzyme catalyses S-adenosyl-L-methionine + H(+) = S-adenosyl 3-(methylsulfanyl)propylamine + CO2. Its pathway is amine and polyamine biosynthesis; S-adenosylmethioninamine biosynthesis; S-adenosylmethioninamine from S-adenosyl-L-methionine: step 1/1. Catalyzes the decarboxylation of S-adenosylmethionine to S-adenosylmethioninamine (dcAdoMet), the propylamine donor required for the synthesis of the polyamines spermine and spermidine from the diamine putrescine. The protein is S-adenosylmethionine decarboxylase proenzyme of Geobacillus kaustophilus (strain HTA426).